The following is a 71-amino-acid chain: Defensin-like protein 292 (71 aa).

Disulfide bonds link cysteine 44–cysteine 64, cysteine 50–cysteine 69, and cysteine 56–cysteine 71.

This sequence belongs to the DEFL family.

The polypeptide is Defensin-like protein 292 (Arabidopsis thaliana (Mouse-ear cress)).